The chain runs to 299 residues: Muscleblind-like protein (299 aa).

2 consecutive C3H1-type zinc fingers follow at residues 38-66 and 72-100; these read WLQV…HPPP and QGRV…HPPQ.

This sequence belongs to the muscleblind family.

The protein localises to the nucleus. In terms of biological role, binds to RNA with repeat sequences CUG and CCUG. The chain is Muscleblind-like protein from Caenorhabditis briggsae.